The sequence spans 907 residues: Valine--tRNA ligase (907 aa).

The 'HIGH' region motif lies at 45–55; the sequence is PNVTGSLHMGH. The 'KMSKS' region motif lies at 554–558; that stretch reads KMSKS. Lysine 557 lines the ATP pocket. Residues 838–870 are a coiled coil; that stretch reads GQLIDLEAERARLVKNVSKIEQDIEKISVKLNN.

This sequence belongs to the class-I aminoacyl-tRNA synthetase family. ValS type 1 subfamily. In terms of assembly, monomer.

Its subcellular location is the cytoplasm. It carries out the reaction tRNA(Val) + L-valine + ATP = L-valyl-tRNA(Val) + AMP + diphosphate. Its function is as follows. Catalyzes the attachment of valine to tRNA(Val). As ValRS can inadvertently accommodate and process structurally similar amino acids such as threonine, to avoid such errors, it has a 'posttransfer' editing activity that hydrolyzes mischarged Thr-tRNA(Val) in a tRNA-dependent manner. This chain is Valine--tRNA ligase, found in Bartonella quintana (strain Toulouse) (Rochalimaea quintana).